The sequence spans 331 residues: Probable allantoicase (331 aa).

The protein belongs to the allantoicase family.

It catalyses the reaction allantoate + H2O = (S)-ureidoglycolate + urea. It participates in nitrogen metabolism; (S)-allantoin degradation; (S)-ureidoglycolate from allantoate (aminidohydrolase route): step 1/1. The polypeptide is Probable allantoicase (Pseudomonas syringae pv. syringae (strain B728a)).